The primary structure comprises 245 residues: Inner membrane protein YgaZ (245 aa).

Residues 1–24 lie on the Cytoplasmic side of the membrane; sequence MESPTPQPAPGSATFMEGCKDSLP. A helical membrane pass occupies residues 25-45; the sequence is IVISYIPVAFAFGLNATRLGF. The Periplasmic portion of the chain corresponds to 46-63; it reads SPLESVFFSCIIYAGASQ. The chain crosses the membrane as a helical span at residues 64–84; the sequence is FVITAMLAAGSSLWIAALTVM. The Cytoplasmic segment spans residues 85 to 109; it reads AMDVRHVLYGPSLRSRIIQRLQKSK. A helical transmembrane segment spans residues 110–130; the sequence is TALWAFGLTDEVFAAATAKLV. Over 131-140 the chain is Periplasmic; it reads RNNRRWSENW. The chain crosses the membrane as a helical span at residues 141–161; it reads MIGIAFSSWSSWVFGTVIGAF. Residues 162–172 are Cytoplasmic-facing; it reads SGSGLLQGYPA. Residues 173 to 193 form a helical membrane-spanning segment; that stretch reads VEAALGFMLPALFMSFLLASF. The Periplasmic portion of the chain corresponds to 194 to 205; it reads QRKQSLCVTAAL. The chain crosses the membrane as a helical span at residues 206–226; sequence VGALAGVTLFSIPVAILAGIV. Residues 227–245 lie on the Cytoplasmic side of the membrane; sequence CGCLTALIQAFWQGAPDEL.

This sequence belongs to the AzlC family.

It is found in the cell inner membrane. This Escherichia coli (strain K12) protein is Inner membrane protein YgaZ (ygaZ).